The following is a 618-amino-acid chain: Leucine aminopeptidase 2 (618 aa).

Residues 140-142 (QCQ) and 272-277 (PYGGME) contribute to the a peptide site. Residue H301 participates in Zn(2+) binding. E302 (proton acceptor) is an active-site residue. Zn(2+) contacts are provided by H305 and E324. The active-site Proton donor is the Y389.

The protein belongs to the peptidase M1 family. It depends on Zn(2+) as a cofactor.

It localises to the cytoplasm. It is found in the nucleus. The catalysed reaction is an epoxide + H2O = an ethanediol. Aminopeptidase that preferentially cleaves di- and tripeptides. Also has low epoxide hydrolase activity (in vitro). Can hydrolyze the epoxide leukotriene LTA(4) but it forms preferentially 5,6-dihydroxy-7,9,11,14-eicosatetraenoic acid rather than the cytokine leukotriene B(4) as the product compared to the homologous mammalian enzyme (in vitro). The protein is Leucine aminopeptidase 2 of Emericella nidulans (strain FGSC A4 / ATCC 38163 / CBS 112.46 / NRRL 194 / M139) (Aspergillus nidulans).